The chain runs to 165 residues: Nucleotide-binding protein Chy400_2003 (165 aa).

It belongs to the YajQ family.

In terms of biological role, nucleotide-binding protein. This is Nucleotide-binding protein Chy400_2003 from Chloroflexus aurantiacus (strain ATCC 29364 / DSM 637 / Y-400-fl).